Consider the following 665-residue polypeptide: Prelamin-A/C (665 aa).

Position 1 is an N-acetylmethionine (M1). The disordered stretch occupies residues M1 to T27. The tract at residues M1–E33 is head. An interaction with MLIP region spans residues M1–A130. T3 carries the post-translational modification Phosphothreonine. S5 carries the post-translational modification Phosphoserine. At T10 the chain carries Phosphothreonine. 2 positions are modified to phosphoserine: S12 and S18. Phosphothreonine is present on T19. The residue at position 22 (S22) is a Phosphoserine. Residues E31–L387 enclose the IF rod domain. K32 is subject to N6-acetyllysine; alternate. K32 carries the post-translational modification N6-succinyllysine; alternate. K32 participates in a covalent cross-link: Glycyl lysine isopeptide (Lys-Gly) (interchain with G-Cter in SUMO2); alternate. Positions D34–V70 are coil 1A. A phosphoserine mark is found at S51, S66, and S71. The interval S71 to A80 is linker 1. N6-acetyllysine is present on residues K78 and K97. The tract at residues Y81–T218 is coil 1B. A Glycyl lysine isopeptide (Lys-Gly) (interchain with G-Cter in SUMO2) cross-link involves residue K97. Phosphoserine is present on S107. Residues K108, K114, K123, K135, K144, and K155 each carry the N6-acetyllysine modification. N6-acetyllysine; alternate is present on K171. An N6-succinyllysine; alternate modification is found at K171. A Glycyl lysine isopeptide (Lys-Gly) (interchain with G-Cter in SUMO2); alternate cross-link involves residue K171. An N6-acetyllysine mark is found at K180, K201, and K208. Residue K201 forms a Glycyl lysine isopeptide (Lys-Gly) (interchain with G-Cter in SUMO2); alternate linkage. Residue K201 forms a Glycyl lysine isopeptide (Lys-Gly) (interchain with G-Cter in SUMO); alternate linkage. Residue K208 forms a Glycyl lysine isopeptide (Lys-Gly) (interchain with G-Cter in SUMO2) linkage. S212 carries the post-translational modification Phosphoserine. Glycyl lysine isopeptide (Lys-Gly) (interchain with G-Cter in SUMO2) cross-links involve residues K219 and K233. Positions K219–A242 are linker 2. K233, K260, K265, and K270 each carry N6-acetyllysine. Positions D243 to E383 are coil 2. K260 is covalently cross-linked (Glycyl lysine isopeptide (Lys-Gly) (interchain with G-Cter in SUMO2); alternate). K270 participates in a covalent cross-link: Glycyl lysine isopeptide (Lys-Gly) (interchain with G-Cter in SUMO2); alternate. A phosphoserine mark is found at S277, S282, S301, and S307. K311 is covalently cross-linked (Glycyl lysine isopeptide (Lys-Gly) (interchain with G-Cter in SUMO2); alternate). An N6-acetyllysine mark is found at K311, K316, and K341. Glycyl lysine isopeptide (Lys-Gly) (interchain with G-Cter in SUMO2) cross-links involve residues K366 and K378. Residues E384–V442 form a disordered region. The interval E384–M665 is tail. A phosphoserine mark is found at S390, S392, S395, S398, S403, S404, S406, S407, S409, and S414. The span at S395–S409 shows a compositional bias: low complexity. At T416 the chain carries Phosphothreonine. Residue K417 is modified to N6-acetyllysine. Glycyl lysine isopeptide (Lys-Gly) (interchain with G-Cter in SUMO2) cross-links involve residues K417 and K420. The short motif at K417–E422 is the Nuclear localization signal element. Phosphoserine occurs at positions 423, 426, 429, and 431. An LTD domain is found at S428–R545. Residue K450 forms a Glycyl lysine isopeptide (Lys-Gly) (interchain with G-Cter in SUMO2); alternate linkage. Residues K450 and K457 each carry the N6-acetyllysine modification. Residues S458 and S463 each carry the phosphoserine modification. Residues K470 and K486 each participate in a glycyl lysine isopeptide (Lys-Gly) (interchain with G-Cter in SUMO2) cross-link. An N6-acetyllysine modification is found at K486. The residue at position 496 (T496) is a Phosphothreonine. S500 is subject to Phosphoserine. Residues T505 and T510 each carry the phosphothreonine modification. Phosphoserine is present on S546. Residue T548 is modified to Phosphothreonine. Positions D552 to D561 are enriched in acidic residues. The tract at residues D552–D577 is disordered. Phosphoserine occurs at positions 570 and 573. K599 participates in a covalent cross-link: Glycyl lysine isopeptide (Lys-Gly) (interchain with G-Cter in SUMO2); alternate. A Glycyl lysine isopeptide (Lys-Gly) (interchain with G-Cter in SUMO1); alternate cross-link involves residue K599. 4 positions are modified to phosphoserine: S613, S614, S617, and S620. O-linked (GlcNAc) serine glycosylation is found at S626 and S629. Phosphoserine occurs at positions 629, 633, 637, and 653. A propeptide spans L648–C662 (removed in Lamin-A/C form). Position 662 is a cysteine methyl ester (C662). C662 is lipidated: S-farnesyl cysteine. Positions S663–M665 are cleaved as a propeptide — removed in Prelamin-A/C form and in Lamin-A/C form.

The protein belongs to the intermediate filament family. As to quaternary structure, homodimer of lamin A and lamin C. Lamin dimers then assemble into dimeric head-to-tail polymers. Ultimately, two head-to-tail polymers assemble laterally into a protofilament with a uniformly shaped rod of 3.5 nm in diameter. Interacts with lamin-associated polypeptides IA, IB and TMPO-alpha, RB1 and with emerin. Interacts with SREBF1, SREBF2, SUN2 and TMEM43. Interacts with TMEM201. Proteolytically processed isoform A interacts with NARF. Interacts with SUN1. Interacts with MLIP. Interacts with DMPK; may regulate nuclear envelope stability. Interacts with SUV39H1; the interaction increases stability of SUV39H1. Interacts with SYNE2. Interacts with ITSN1 isoform 2. Interacts with IFFO1; enables the formation of an interior nucleoskeleton that is recruited to DNA double-strand breaks. In terms of assembly, interacts with EMD. Interacts (via C-terminus) with LEMD2 (via N-terminus) (in vitro). Proteolytic cleavage of the C-terminal of 18 residues of prelamin-A/C results in the production of lamin-A/C. The prelamin-A/C maturation pathway includes farnesylation of CAAX motif by protein farnesyltransferase (FNTA and FNTB), removal of the last three amino acids (-AAX) by RCE1/FACE2 and/or ZMPSTE24, methylation of the C-terminal cysteine by ICMT and endoproteolytic removal of the last 15 C-terminal amino acids by ZMPSTE24. Proteolytic cleavage requires prior farnesylation and methylation, and absence of these blocks cleavage. Post-translationally, farnesylation of prelamin-A/C facilitates nuclear envelope targeting. In terms of processing, phosphorylation plays a key role in lamin organization, subcellular localization and nuclear envelope disintegration. Phosphorylation by CDK1 at Ser-22 and Ser-392 at the onset of mitosis drives lamin disassembly and nuclear envelope breakdown. Phosphorylation at Ser-22 and Ser-392 during interphase promotes localization to the nucleoplasm and regulates lamina assembly. Phosphorylation at Ser-22, Ser-392 and Ser-629 during interphase causes redistribution between the nucleus and the cytoplasm. Phosphorylation at Ser-22 by CDK1 regulates matrix stiffness. Phosphorylation status of Ser-22 determines its localization between double-strand break (DSB) sites and the nuclear matrix. Phosphorylated by ATR at Ser-282 in response to DNA damage, leading to lamin disassembly and nuclear envelope rupture. Phosphorylation also regulates stability in micronuclei arising from genome instability: phosphorylation at Ser-395 by ATR in response to genome instability and double-stranded DNA breaks primes LMNA for subsequent phosphorylation at Ser-392 by CDK1 and micronuclei envelope rupture. The rupture of micronuclear envelope triggers the cGAS-STING pathway thereby activating the type I interferon response and innate immunity. Acetylation by KAT8 is required for nuclear architecture. Post-translationally, sumoylation is necessary for the localization to the nuclear envelope.

It is found in the nucleus lamina. Its subcellular location is the nucleus envelope. The protein resides in the nucleus. The protein localises to the nucleoplasm. It localises to the nucleus matrix. Lamins are intermediate filament proteins that assemble into a filamentous meshwork, and which constitute the major components of the nuclear lamina, a fibrous layer on the nucleoplasmic side of the inner nuclear membrane. Lamins provide a framework for the nuclear envelope, bridging the nuclear envelope and chromatin, thereby playing an important role in nuclear assembly, chromatin organization, nuclear membrane and telomere dynamics. Lamin A and C also regulate matrix stiffness by conferring nuclear mechanical properties. The structural integrity of the lamina is strictly controlled by the cell cycle, as seen by the disintegration and formation of the nuclear envelope in prophase and telophase, respectively. Lamin A and C are present in equal amounts in the lamina of mammals. Also invoved in DNA repair: recruited by DNA repair proteins XRCC4 and IFFO1 to the DNA double-strand breaks (DSBs) to prevent chromosome translocation by immobilizing broken DNA ends. Required for normal development of peripheral nervous system and skeletal muscle and for muscle satellite cell proliferation. Required for osteoblastogenesis and bone formation. Also prevents fat infiltration of muscle and bone marrow, helping to maintain the volume and strength of skeletal muscle and bone. Required for cardiac homeostasis. Functionally, prelamin-A/C can accelerate smooth muscle cell senescence. It acts to disrupt mitosis and induce DNA damage in vascular smooth muscle cells (VSMCs), leading to mitotic failure, genomic instability, and premature senescence. The chain is Prelamin-A/C (Lmna) from Rattus norvegicus (Rat).